A 516-amino-acid polypeptide reads, in one-letter code: uncharacterized protein (516 aa).

A signal peptide spans 1-22; that stretch reads MLYRFWKTGLAIFMPGCILLSS. C23 carries N-palmitoyl cysteine lipidation. C23 carries S-diacylglycerol cysteine lipidation.

It belongs to the MG067/MG068/MG395 family.

The protein localises to the cell membrane. This is an uncharacterized protein from Mycoplasma genitalium (strain ATCC 33530 / DSM 19775 / NCTC 10195 / G37) (Mycoplasmoides genitalium).